Here is a 611-residue protein sequence, read N- to C-terminus: Zinc metalloproteinase-disintegrin-like MTP9 (611 aa).

The signal sequence occupies residues Met1 to Ser20. The propeptide occupies Ile21 to Leu191. One can recognise a Peptidase M12B domain in the interval Lys205–Pro401. Position 208 (Glu208) interacts with Ca(2+). The N-linked (GlcNAc...) asparagine glycan is linked to Asn282. Asp292 serves as a coordination point for Ca(2+). Cystine bridges form between Cys316–Cys396, Cys356–Cys380, and Cys358–Cys363. The Zn(2+) site is built by His341, His345, and His351. Residues Cys396, Asn399, Asn414, Phe416, Glu418, Glu421, and Asp424 each coordinate Ca(2+). The 85-residue stretch at Pro409 to Asn493 folds into the Disintegrin domain. 15 disulfides stabilise this stretch: Cys412–Cys441, Cys423–Cys436, Cys425–Cys431, Cys435–Cys456, Cys447–Cys453, Cys452–Cys478, Cys465–Cys485, Cys472–Cys504, Cys497–Cys509, Cys516–Cys566, Cys531–Cys573, Cys541–Cys575, Cys544–Cys554, Cys561–Cys599, and Cys593–Cys604. The D/ECD-tripeptide motif lies at Asp471 to Asp473. Positions 473, 474, 476, and 488 each coordinate Ca(2+). Residues Asn548 and Asn570 are each glycosylated (N-linked (GlcNAc...) asparagine).

It belongs to the venom metalloproteinase (M12B) family. P-III subfamily. As to quaternary structure, monomer. Zn(2+) is required as a cofactor. In terms of tissue distribution, expressed by the venom gland.

It is found in the secreted. In terms of biological role, snake venom zinc metalloproteinase that may impair hemostasis in the prey. In Drysdalia coronoides (White-lipped snake), this protein is Zinc metalloproteinase-disintegrin-like MTP9.